The following is a 425-amino-acid chain: UPF0761 membrane protein PXO_04555 (425 aa).

A run of 6 helical transmembrane segments spans residues Val-48–Phe-68, Phe-105–Glu-125, Gly-154–Phe-174, Leu-182–Ile-202, Gly-219–Gly-239, and Ala-250–Leu-270.

Belongs to the UPF0761 family.

It localises to the cell inner membrane. In Xanthomonas oryzae pv. oryzae (strain PXO99A), this protein is UPF0761 membrane protein PXO_04555.